A 492-amino-acid polypeptide reads, in one-letter code: Bifunctional purine biosynthesis protein PurH (492 aa).

Residues 1 to 144 form the MGS-like domain; that stretch reads MKKVILSVSD…KNFKHVTTIV (144 aa).

This sequence belongs to the PurH family.

The catalysed reaction is (6R)-10-formyltetrahydrofolate + 5-amino-1-(5-phospho-beta-D-ribosyl)imidazole-4-carboxamide = 5-formamido-1-(5-phospho-D-ribosyl)imidazole-4-carboxamide + (6S)-5,6,7,8-tetrahydrofolate. The enzyme catalyses IMP + H2O = 5-formamido-1-(5-phospho-D-ribosyl)imidazole-4-carboxamide. Its pathway is purine metabolism; IMP biosynthesis via de novo pathway; 5-formamido-1-(5-phospho-D-ribosyl)imidazole-4-carboxamide from 5-amino-1-(5-phospho-D-ribosyl)imidazole-4-carboxamide (10-formyl THF route): step 1/1. It functions in the pathway purine metabolism; IMP biosynthesis via de novo pathway; IMP from 5-formamido-1-(5-phospho-D-ribosyl)imidazole-4-carboxamide: step 1/1. This is Bifunctional purine biosynthesis protein PurH from Staphylococcus carnosus (strain TM300).